A 677-amino-acid polypeptide reads, in one-letter code: Methionine--tRNA ligase (677 aa).

A 'HIGH' region motif is present at residues 14–24 (PYANGSIHLGH). Zn(2+) is bound by residues Cys145, Cys148, Cys158, and Cys161. The 'KMSKS' region motif lies at 331-335 (KMSKS). Lys334 contacts ATP. The tRNA-binding domain occupies 575 to 677 (AFAAVDLRIA…SGAKPGQRVK (103 aa)).

It belongs to the class-I aminoacyl-tRNA synthetase family. MetG type 1 subfamily. In terms of assembly, homodimer. Zn(2+) serves as cofactor.

The protein resides in the cytoplasm. The enzyme catalyses tRNA(Met) + L-methionine + ATP = L-methionyl-tRNA(Met) + AMP + diphosphate. In terms of biological role, is required not only for elongation of protein synthesis but also for the initiation of all mRNA translation through initiator tRNA(fMet) aminoacylation. The chain is Methionine--tRNA ligase from Pseudomonas aeruginosa (strain LESB58).